The sequence spans 80 residues: Gamma-conotoxin PnVIIA (80 aa).

The signal sequence occupies residues 1–19 (MEKLTILLLVAAVLMSTQA). The propeptide occupies 20 to 43 (QNQEQRQQAKINFLSKRKPSAERW). Cystine bridges form between cysteine 47–cysteine 61, cysteine 54–cysteine 65, and cysteine 60–cysteine 70. Glutamate 59 is subject to 4-carboxyglutamate. Glutamate 71 is subject to 4-carboxyglutamate. Proline 76 bears the 4-hydroxyproline mark. The propeptide occupies 78-80 (FGA).

Expressed by the venom duct.

It is found in the secreted. Functionally, gamma-conotoxins may act on voltage-gated non-specific cation pacemaker channels (HCN). Triggers depolarization and firing of action potential bursts in the caudodorsal neurons of lymnaea. This effect is due to activation or enhancement of a slow inward cation current that may underlie endogenous bursting activity of these neurons. In Conus pennaceus (Feathered cone), this protein is Gamma-conotoxin PnVIIA.